The chain runs to 298 residues: Mimecan (298 aa).

An N-terminal signal peptide occupies residues Met-1–Gln-19. Asn-88 carries an N-linked (GlcNAc...) (keratan sulfate) asparagine glycan. 7 LRR repeats span residues Asp-112–Ile-131, Lys-132–Ile-155, Glu-156–Leu-179, Leu-180–Ile-199, Lys-200–Leu-225, Glu-226–Ile-246, and Ser-247–Ile-277. Residues Cys-255 and Cys-288 are joined by a disulfide bond. Residue Asn-258 is glycosylated (N-linked (GlcNAc...) (keratan sulfate) asparagine).

Belongs to the small leucine-rich proteoglycan (SLRP) family. SLRP class III subfamily. Contains keratan sulfate.

The protein localises to the secreted. The protein resides in the extracellular space. It localises to the extracellular matrix. In terms of biological role, induces bone formation in conjunction with TGF-beta-1 or TGF-beta-2. In Mus musculus (Mouse), this protein is Mimecan (Ogn).